We begin with the raw amino-acid sequence, 973 residues long: Valine--tRNA ligase (973 aa).

Residues 57–67 (PNVTGSLHMGH) carry the 'HIGH' region motif. A 'KMSKS' region motif is present at residues 569–573 (KMSKS). Position 572 (Lys572) interacts with ATP. Residues 901 to 970 (MAGLIDKEAE…AKILEQKIQI (70 aa)) adopt a coiled-coil conformation.

This sequence belongs to the class-I aminoacyl-tRNA synthetase family. ValS type 1 subfamily. Monomer.

The protein resides in the cytoplasm. The catalysed reaction is tRNA(Val) + L-valine + ATP = L-valyl-tRNA(Val) + AMP + diphosphate. Catalyzes the attachment of valine to tRNA(Val). As ValRS can inadvertently accommodate and process structurally similar amino acids such as threonine, to avoid such errors, it has a 'posttransfer' editing activity that hydrolyzes mischarged Thr-tRNA(Val) in a tRNA-dependent manner. The polypeptide is Valine--tRNA ligase (Colwellia psychrerythraea (strain 34H / ATCC BAA-681) (Vibrio psychroerythus)).